A 196-amino-acid polypeptide reads, in one-letter code: ATP synthase subunit b 2 (196 aa).

The segment covering 1-18 (MVVAQAGAPAHPPAAHGA) has biased composition (low complexity). The segment at 1-33 (MVVAQAGAPAHPPAAHGAEAGHGEAAGGEHGGF) is disordered. Residues 41-60 (FASQLIWLIVSFGALYFLMS) traverse the membrane as a helical segment.

It belongs to the ATPase B chain family. In terms of assembly, F-type ATPases have 2 components, F(1) - the catalytic core - and F(0) - the membrane proton channel. F(1) has five subunits: alpha(3), beta(3), gamma(1), delta(1), epsilon(1). F(0) has three main subunits: a(1), b(2) and c(10-14). The alpha and beta chains form an alternating ring which encloses part of the gamma chain. F(1) is attached to F(0) by a central stalk formed by the gamma and epsilon chains, while a peripheral stalk is formed by the delta and b chains.

It localises to the cell inner membrane. In terms of biological role, f(1)F(0) ATP synthase produces ATP from ADP in the presence of a proton or sodium gradient. F-type ATPases consist of two structural domains, F(1) containing the extramembraneous catalytic core and F(0) containing the membrane proton channel, linked together by a central stalk and a peripheral stalk. During catalysis, ATP synthesis in the catalytic domain of F(1) is coupled via a rotary mechanism of the central stalk subunits to proton translocation. Component of the F(0) channel, it forms part of the peripheral stalk, linking F(1) to F(0). The b'-subunit is a diverged and duplicated form of b found in plants and photosynthetic bacteria. This Azorhizobium caulinodans (strain ATCC 43989 / DSM 5975 / JCM 20966 / LMG 6465 / NBRC 14845 / NCIMB 13405 / ORS 571) protein is ATP synthase subunit b 2 (atpF2).